The chain runs to 294 residues: Pyrroline-5-carboxylate reductase (294 aa).

It belongs to the pyrroline-5-carboxylate reductase family.

It is found in the cytoplasm. It carries out the reaction L-proline + NADP(+) = (S)-1-pyrroline-5-carboxylate + NADPH + 2 H(+). It catalyses the reaction L-proline + NAD(+) = (S)-1-pyrroline-5-carboxylate + NADH + 2 H(+). Its pathway is amino-acid biosynthesis; L-proline biosynthesis; L-proline from L-glutamate 5-semialdehyde: step 1/1. Its function is as follows. Catalyzes the reduction of 1-pyrroline-5-carboxylate (PCA) to L-proline. This is Pyrroline-5-carboxylate reductase from Mycobacterium leprae (strain TN).